Consider the following 86-residue polypeptide: Large ribosomal subunit protein bL31B (86 aa).

The protein belongs to the bacterial ribosomal protein bL31 family. Type B subfamily. In terms of assembly, part of the 50S ribosomal subunit.

This Vibrio vulnificus (strain YJ016) protein is Large ribosomal subunit protein bL31B.